Consider the following 33-residue polypeptide: Photosystem II reaction center protein Psb30 (33 aa).

A helical membrane pass occupies residues 5-25; it reads LITQLASLILIVASGPIVIGL.

This sequence belongs to the Psb30/Ycf12 family. In terms of assembly, PSII is composed of 1 copy each of membrane proteins PsbA, PsbB, PsbC, PsbD, PsbE, PsbF, PsbH, PsbI, PsbJ, PsbK, PsbL, PsbM, PsbT, PsbX, PsbY, PsbZ, Psb30/Ycf12, peripheral proteins of the oxygen-evolving complex and a large number of cofactors. It forms dimeric complexes.

Its subcellular location is the plastid. The protein resides in the chloroplast thylakoid membrane. A core subunit of photosystem II (PSII), probably helps stabilize the reaction center. The polypeptide is Photosystem II reaction center protein Psb30 (Lepocinclis buetschlii).